The chain runs to 463 residues: MGSKSPEGHWQAPHASNSNELKPANPDPQTSQNGSGSADLDRGVIGDDDDDDEDAEENGVNTETPNVEKKKKRKKSNKKKKKKTKSGTLSVTELKQTSPPRVLVSTLFPSEYPVGELVPYDCTTRTTDEESRYNSRLWDDDFLPDYRQAAEIHRQVRQYAQKELIKPGATLLSIAEGIEDGVRALSGHQGLEPGDFFKAGMGFPTGLCLNHIAAHWTPNPREKDVILDKGDVLKVDFGVHVNGRIVDSAFTVAFDDKYDNLLTAVREATNTGIKHAGVDARMSDIGAAIQEVMESYEVEIDGKVFPVKAIRNITGHDILRYHIHGGKQIPFIKNNNQDKMEEGEVYAIETFGSTGRGFLDDDVGVYGYGRNENMSGANLRLSSAKSLLKTIDANFGSIVFSRRYLERLGVKNYLLGMKNLVDNGIVECYSPLVDVKGSYTAQFEHTILLHSGGKEVISRGDDY.

A disordered region spans residues 1–97; it reads MGSKSPEGHW…TLSVTELKQT (97 aa). Polar residues predominate over residues 27–36; that stretch reads DPQTSQNGSG. Residues 46 to 57 show a composition bias toward acidic residues; the sequence is GDDDDDDEDAEE. The segment covering 69-85 has biased composition (basic residues); it reads KKKKRKKSNKKKKKKTK. The span at 86 to 97 shows a compositional bias: polar residues; the sequence is SGTLSVTELKQT. H215 contributes to the substrate binding site. A divalent metal cation is bound by residues D236, D247, and H316. Residue H324 coordinates substrate. Positions 349 and 444 each coordinate a divalent metal cation.

Belongs to the peptidase M24A family. Methionine aminopeptidase eukaryotic type 2 subfamily. Co(2+) serves as cofactor. Zn(2+) is required as a cofactor. Requires Mn(2+) as cofactor. It depends on Fe(2+) as a cofactor.

The protein resides in the cytoplasm. It catalyses the reaction Release of N-terminal amino acids, preferentially methionine, from peptides and arylamides.. Its function is as follows. Cotranslationally removes the N-terminal methionine from nascent proteins. The N-terminal methionine is often cleaved when the second residue in the primary sequence is small and uncharged (Met-Ala-, Cys, Gly, Pro, Ser, Thr, or Val). The sequence is that of Methionine aminopeptidase 2-2 from Neosartorya fischeri (strain ATCC 1020 / DSM 3700 / CBS 544.65 / FGSC A1164 / JCM 1740 / NRRL 181 / WB 181) (Aspergillus fischerianus).